Reading from the N-terminus, the 132-residue chain is Fluoride-specific ion channel FluC 1 (132 aa).

A run of 4 helical transmembrane segments spans residues 9 to 29 (LAAV…LSAL), 35 to 55 (ASWP…VGYF), 72 to 89 (LLGT…TMQV), and 100 to 120 (WGLA…AVHL). Na(+)-binding residues include Gly-79 and Thr-82.

The protein belongs to the fluoride channel Fluc/FEX (TC 1.A.43) family.

It is found in the cell membrane. The enzyme catalyses fluoride(in) = fluoride(out). Its activity is regulated as follows. Na(+) is not transported, but it plays an essential structural role and its presence is essential for fluoride channel function. Fluoride-specific ion channel. Important for reducing fluoride concentration in the cell, thus reducing its toxicity. In Mycolicibacterium paratuberculosis (strain ATCC BAA-968 / K-10) (Mycobacterium paratuberculosis), this protein is Fluoride-specific ion channel FluC 1.